The primary structure comprises 366 residues: Phospho-2-dehydro-3-deoxyheptonate aldolase (366 aa).

Belongs to the class-I DAHP synthase family.

The catalysed reaction is D-erythrose 4-phosphate + phosphoenolpyruvate + H2O = 7-phospho-2-dehydro-3-deoxy-D-arabino-heptonate + phosphate. It participates in metabolic intermediate biosynthesis; chorismate biosynthesis; chorismate from D-erythrose 4-phosphate and phosphoenolpyruvate: step 1/7. Stereospecific condensation of phosphoenolpyruvate (PEP) and D-erythrose-4-phosphate (E4P) giving rise to 3-deoxy-D-arabino-heptulosonate-7-phosphate (DAHP). The polypeptide is Phospho-2-dehydro-3-deoxyheptonate aldolase (aroG) (Corynebacterium glutamicum (strain ATCC 13032 / DSM 20300 / JCM 1318 / BCRC 11384 / CCUG 27702 / LMG 3730 / NBRC 12168 / NCIMB 10025 / NRRL B-2784 / 534)).